The sequence spans 48 residues: Large ribosomal subunit protein bL34c (48 aa).

The protein belongs to the bacterial ribosomal protein bL34 family.

It localises to the plastid. Its subcellular location is the chloroplast. This chain is Large ribosomal subunit protein bL34c, found in Thalassiosira pseudonana (Marine diatom).